The primary structure comprises 122 residues: Small ribosomal subunit protein uS8c (122 aa).

The protein belongs to the universal ribosomal protein uS8 family. In terms of assembly, part of the 30S ribosomal subunit.

The protein resides in the plastid. The protein localises to the chloroplast. In terms of biological role, one of the primary rRNA binding proteins, it binds directly to 16S rRNA central domain where it helps coordinate assembly of the platform of the 30S subunit. The chain is Small ribosomal subunit protein uS8c (rps8) from Ostreococcus tauri.